We begin with the raw amino-acid sequence, 78 residues long: Disintegrin DisBa-01 (78 aa).

The region spanning 1–78 (GNELLEAGEE…AGCPRNPFHA (78 aa)) is the Disintegrin domain. Disulfide bonds link cysteine 11–cysteine 26, cysteine 13–cysteine 21, cysteine 20–cysteine 43, cysteine 34–cysteine 40, cysteine 39–cysteine 64, and cysteine 52–cysteine 71. The Cell attachment site signature appears at 56–58 (RGD).

It belongs to the venom metalloproteinase (M12B) family. P-II subfamily. P-IIa sub-subfamily. In terms of assembly, monomer. As to expression, expressed by the venom gland.

Its subcellular location is the secreted. This recombinant disintegrin antagonizes integrins alpha-IIb/beta-3 (ITGA2B/ITGB3) and alpha-V/beta-3 (ITGAV/ITGB3). On ITGA2B/ITGB3, it interferes with the outside/-in phosphorylation of the focal adhesion kinase (PTK2 / FAK) downstream of the integrin. It strongly inhibits platelet aggregation induced by ADP, thrombin, and collagen, abolishes and reverses dynamic platelet recruitment to immobilized fibrinogen. In vivo, it induces a dramatic increase in the tail bleeding time, and has a strong antithrombotic activity. On ITGAV/ITGB3, it inhibits the adhesion of ITGAV/ITGB3-expressing human microvascular endothelial cell line and murine melanoma cell line to vitronectin (IC(50) are 555 nM and 225 nM, respectively), and transiently inhibits their proliferation without direct cell toxicity. In vivo, it potently inhibits angiogenesis and metastasis, probably due to its capability to strongly inhibit the expression of VEGF and its receptors in endothelial cells. It also inhibits tumor cell migration in vitro. This is Disintegrin DisBa-01 from Bothrops alternatus (Urutu).